A 775-amino-acid chain; its full sequence is Protein STRUBBELIG-RECEPTOR FAMILY 1 (775 aa).

Positions 1–31 (MRSMRSGRDNNICFLGFLSFALISLPSLSLA) are cleaved as a signal peptide. Residues 32–314 (LTNPDDVAAI…GKEDSFTSKR (283 aa)) lie on the Extracellular side of the membrane. 6 LRR repeats span residues 101 to 122 (SLKAMDFSNNHIGGSIPSTLPV), 123 to 146 (SLQNLFLSGNNFTGTIPESLSSLK), 147 to 169 (SLSVMSLNNNLLSGKIPDVFQDL), 171 to 193 (LMINIDLSSNNLSGPLPPSMQNL), 195 to 217 (TLTSLLLQNNHLSGELDVLQDLP), and 218 to 238 (LKDLNVENNLFNGPIPEKLLS). N-linked (GlcNAc...) asparagine glycosylation is present at Asn-133. N-linked (GlcNAc...) asparagine glycans are attached at residues Asn-181 and Asn-192. The N-linked (GlcNAc...) asparagine glycan is linked to Asn-250. The segment at 254-308 (APSPSPETPPSPTSPKRPFFGPPSPNASAGHGQAHVRSPPSDHHPSRPTPQGKED) is disordered. Positions 256–278 (SPSPETPPSPTSPKRPFFGPPSP) are enriched in pro residues. Asn-279 is a glycosylation site (N-linked (GlcNAc...) asparagine). A helical transmembrane segment spans residues 315 to 335 (IIWISILGAFSFVVLALVCLL). The Cytoplasmic portion of the chain corresponds to 336–775 (CGRKCLRKRE…NGDNQYTGRR (440 aa)). The tract at residues 345-414 (EDSEQLSKPH…VGSESKQESH (70 aa)) is disordered. Residues 367–379 (RSNASMLPPSNTF) are compositionally biased toward polar residues. The span at 380 to 391 (NKDKEARPKERV) shows a compositional bias: basic and acidic residues. The Protein kinase domain occupies 478–756 (FSHENLIGTG…EVVQDLSDMI (279 aa)).

The protein belongs to the protein kinase superfamily. Ser/Thr protein kinase family. As to expression, expressed in roots, stems, leaves and flowers. Low expression in seedlings and siliques.

The protein localises to the membrane. Not essential for epidermal patterning and not redundant with STRUBBELIG. The protein is Protein STRUBBELIG-RECEPTOR FAMILY 1 (SRF1) of Arabidopsis thaliana (Mouse-ear cress).